Consider the following 378-residue polypeptide: uncharacterized protein (378 aa).

10 consecutive transmembrane segments (helical) span residues 7-29, 33-55, 68-85, 90-108, 115-137, 152-174, 204-225, 245-267, 280-302, and 347-366; these read VTPF…RLSQ, LFFV…YQII, VSYL…EFYT, SGSL…HLLL, PLTV…FLYL, LTVG…MLIM, NYKL…FLYL, IFLF…ASHA, LILY…PRIV, and FSPL…ALFL.

It localises to the cell membrane. This is an uncharacterized protein from Aquifex aeolicus (strain VF5).